Here is an 89-residue protein sequence, read N- to C-terminus: Small ribosomal subunit protein uS15 (89 aa).

This sequence belongs to the universal ribosomal protein uS15 family. In terms of assembly, part of the 30S ribosomal subunit. Forms a bridge to the 50S subunit in the 70S ribosome, contacting the 23S rRNA.

Its function is as follows. One of the primary rRNA binding proteins, it binds directly to 16S rRNA where it helps nucleate assembly of the platform of the 30S subunit by binding and bridging several RNA helices of the 16S rRNA. Functionally, forms an intersubunit bridge (bridge B4) with the 23S rRNA of the 50S subunit in the ribosome. This is Small ribosomal subunit protein uS15 from Pectobacterium atrosepticum (strain SCRI 1043 / ATCC BAA-672) (Erwinia carotovora subsp. atroseptica).